Consider the following 474-residue polypeptide: Trichothecene 3-O-acetyltransferase (474 aa).

The protein belongs to the trichothecene 3-O-acetyltransferase family.

Functionally, trichothecene 3-O-acetyltransferase involved in self-protection against trichothecenes, mycotoxins acting as eukaryotic protein synthesis inhibitors. Its existence is surprising in a non-trichothecene producer organism which needs no self-protection again endogenic trichothecenes. The persistence of this non-essential gene may be due to a selective advantage that it may confer, like a resistance to exogenic trichothecenes. In Saccharomyces cerevisiae (strain ATCC 204508 / S288c) (Baker's yeast), this protein is Trichothecene 3-O-acetyltransferase (AYT1).